The following is an 880-amino-acid chain: Xylosyltransferase oxt (880 aa).

The Cytoplasmic segment spans residues 1–14; it reads MEQSVSARWLRRYR. Residues 15–35 form a helical; Signal-anchor for type II membrane protein membrane-spanning segment; it reads PVLIILVLIFGIQLFLAYKSV. Residues 36–880 are Lumenal-facing; the sequence is DIGGGSGSGL…PKSDVDALLK (845 aa). 4 disulfides stabilise this stretch: Cys-87-Cys-115, Cys-131-Cys-469, Cys-488-Cys-501, and Cys-490-Cys-499. 2 N-linked (GlcNAc...) asparagine glycosylation sites follow: Asn-135 and Asn-139. Residues 138 to 232 enclose the WSC domain; the sequence is ANVSLGCYRD…FYAMNIYETG (95 aa). Residues Asp-287 and 316–318 contribute to the UDP-alpha-D-xylose site; that span reads TIW. The N-linked (GlcNAc...) asparagine glycan is linked to Asn-346. 419–420 lines the UDP-alpha-D-xylose pocket; the sequence is DW. UDP-alpha-D-xylose-binding positions include Ser-502 and 526 to 527; that span reads RK. N-linked (GlcNAc...) asparagine glycans are attached at residues Asn-700 and Asn-729. An intrachain disulfide couples Cys-846 to Cys-859.

Belongs to the glycosyltransferase 14 family. XylT subfamily. It depends on Ca(2+) as a cofactor. Mn(2+) is required as a cofactor. Requires Mg(2+) as cofactor.

It localises to the endoplasmic reticulum membrane. The protein localises to the golgi apparatus membrane. It carries out the reaction UDP-alpha-D-xylose + L-seryl-[protein] = 3-O-(beta-D-xylosyl)-L-seryl-[protein] + UDP + H(+). It functions in the pathway glycan metabolism; chondroitin sulfate biosynthesis. The protein operates within glycan metabolism; heparan sulfate biosynthesis. In terms of biological role, catalyzes the first step in biosynthesis of glycosaminoglycan. Transfers D-xylose from UDP-D-xylose to specific serine residues of the core protein. The polypeptide is Xylosyltransferase oxt (Drosophila pseudoobscura pseudoobscura (Fruit fly)).